We begin with the raw amino-acid sequence, 345 residues long: tRNA N6-adenosine threonylcarbamoyltransferase (345 aa).

Fe cation is bound by residues His113 and His117. Substrate-binding positions include 142-146 (AISGG), Asp175, Gly188, Asp192, and Asn282. Asp310 lines the Fe cation pocket.

This sequence belongs to the KAE1 / TsaD family. Requires Fe(2+) as cofactor.

The protein resides in the cytoplasm. It carries out the reaction L-threonylcarbamoyladenylate + adenosine(37) in tRNA = N(6)-L-threonylcarbamoyladenosine(37) in tRNA + AMP + H(+). Required for the formation of a threonylcarbamoyl group on adenosine at position 37 (t(6)A37) in tRNAs that read codons beginning with adenine. Is involved in the transfer of the threonylcarbamoyl moiety of threonylcarbamoyl-AMP (TC-AMP) to the N6 group of A37, together with TsaE and TsaB. TsaD likely plays a direct catalytic role in this reaction. In Bdellovibrio bacteriovorus (strain ATCC 15356 / DSM 50701 / NCIMB 9529 / HD100), this protein is tRNA N6-adenosine threonylcarbamoyltransferase.